We begin with the raw amino-acid sequence, 732 residues long: 1,4-alpha-glucan branching enzyme GlgB 1 (732 aa).

The active-site Nucleophile is D411. E464 (proton donor) is an active-site residue.

Belongs to the glycosyl hydrolase 13 family. GlgB subfamily. Monomer.

The enzyme catalyses Transfers a segment of a (1-&gt;4)-alpha-D-glucan chain to a primary hydroxy group in a similar glucan chain.. The protein operates within glycan biosynthesis; glycogen biosynthesis. In terms of biological role, catalyzes the formation of the alpha-1,6-glucosidic linkages in glycogen by scission of a 1,4-alpha-linked oligosaccharide from growing alpha-1,4-glucan chains and the subsequent attachment of the oligosaccharide to the alpha-1,6 position. The protein is 1,4-alpha-glucan branching enzyme GlgB 1 of Xanthomonas euvesicatoria pv. vesicatoria (strain 85-10) (Xanthomonas campestris pv. vesicatoria).